A 505-amino-acid polypeptide reads, in one-letter code: L-carnitine/gamma-butyrobetaine antiporter (505 aa).

12 helical membrane-spanning segments follow: residues 10–30, 51–71, 92–112, 143–163, 195–215, 231–251, 263–283, 316–336, 347–367, 403–423, 446–466, and 475–495; these read IEPKVFFPPLIIVGILCWLTV, WGWAFEWYMIVMLFGWFWLVF, IFMMFASCTSAAVLFWGSIEI, GPLPWATYSFLSVAFAYFFFV, FYLVALIFAMGTSLGLATPLV, LDAIIITCWIILNAICVACGL, SYLSFLMLGWVFIVSGASFIM, WTVFYWAWWVIYAIQMSIFLA, LCFGMVMGLTASTWILWTVLG, LSTATMWGFFILCFIATVTLI, LLVRIGWSVLVGIIGIVLLAL, and AIIAGGCPLFFVNIMVTLSFI.

Belongs to the BCCT transporter (TC 2.A.15) family. CaiT subfamily. As to quaternary structure, homotrimer.

It is found in the cell inner membrane. It carries out the reaction 4-(trimethylamino)butanoate(in) + (R)-carnitine(out) = 4-(trimethylamino)butanoate(out) + (R)-carnitine(in). It participates in amine and polyamine metabolism; carnitine metabolism. Its function is as follows. Catalyzes the exchange of L-carnitine for gamma-butyrobetaine. In Salmonella gallinarum (strain 287/91 / NCTC 13346), this protein is L-carnitine/gamma-butyrobetaine antiporter.